The primary structure comprises 394 residues: Purine ribonucleoside efflux pump NepI (394 aa).

At 1 to 21 the chain is on the cytoplasmic side; that stretch reads MSEFIAENRGADAITRPNWSA. Residues 22-42 traverse the membrane as a helical segment; the sequence is VFSVAFCVACLIIVEFLPVSL. At 43–54 the chain is on the periplasmic side; the sequence is LTPMAQDLGISE. The chain crosses the membrane as a helical span at residues 55-75; the sequence is GVAGQSVTVTAFVAMFASLFI. Residues 76-85 are Cytoplasmic-facing; it reads TQTIQATDRR. A helical membrane pass occupies residues 86 to 106; sequence YVVILFAVLLTISCLLVSFAN. Residue Ser107 is a topological domain, periplasmic. A helical transmembrane segment spans residues 108-128; sequence FSLLLIGRACLGLALGGFWAM. At 129–147 the chain is on the cytoplasmic side; that stretch reads SASLTMRLVPPRTVPKALS. Residues 148–168 traverse the membrane as a helical segment; it reads VIFGAVSIALVIAAPLGSFLG. The Periplasmic portion of the chain corresponds to 169–175; that stretch reads ELIGWRN. The helical transmembrane segment at 176 to 196 threads the bilayer; it reads VFNAAAVMGVLCIFWIIKSLP. Residues 197 to 215 lie on the Cytoplasmic side of the membrane; the sequence is SLPGKPSHQKQNTFRLLQR. Residues 216 to 236 form a helical membrane-spanning segment; it reads PGVMAGMIAIFMSFAGQFAFF. Residues 237–255 lie on the Periplasmic side of the membrane; the sequence is TYIRPVYMNLAGFGVDGLT. A helical transmembrane segment spans residues 256 to 276; the sequence is LVLLSFGIASFIGTSLSSFIL. Over 277–281 the chain is Cytoplasmic; the sequence is KRSVK. The helical transmembrane segment at 282–302 threads the bilayer; the sequence is LALAGAPLILAVSALVLTLCG. The Periplasmic segment spans residues 303–305; the sequence is SDK. The chain crosses the membrane as a helical span at residues 306–326; the sequence is IVATGVAIIWGLTFALVPVGW. At 327 to 343 the chain is on the cytoplasmic side; sequence STWSTRSLADQAEKAGS. A helical transmembrane segment spans residues 344-364; that stretch reads IQVAVIQLANTCGAAIGGYAL. Topologically, residues 365–366 are periplasmic; it reads DN. Residues 367–387 traverse the membrane as a helical segment; sequence IGLTSPLMLSGTLMLLTALLV. At 388–394 the chain is on the cytoplasmic side; the sequence is TAKVKMK.

It belongs to the major facilitator superfamily. DHA1 family. NepI (TC 2.A.1.2.26) subfamily.

Its subcellular location is the cell inner membrane. It carries out the reaction inosine(in) + H(+)(out) = inosine(out) + H(+)(in). It catalyses the reaction guanosine(in) + H(+)(out) = guanosine(out) + H(+)(in). Functionally, involved in the efflux of purine ribonucleosides, such as inosine and guanosine. This Shigella dysenteriae serotype 1 (strain Sd197) protein is Purine ribonucleoside efflux pump NepI.